The primary structure comprises 420 residues: Gamma-glutamyl phosphate reductase (420 aa).

It belongs to the gamma-glutamyl phosphate reductase family.

The protein localises to the cytoplasm. It carries out the reaction L-glutamate 5-semialdehyde + phosphate + NADP(+) = L-glutamyl 5-phosphate + NADPH + H(+). It participates in amino-acid biosynthesis; L-proline biosynthesis; L-glutamate 5-semialdehyde from L-glutamate: step 2/2. Its function is as follows. Catalyzes the NADPH-dependent reduction of L-glutamate 5-phosphate into L-glutamate 5-semialdehyde and phosphate. The product spontaneously undergoes cyclization to form 1-pyrroline-5-carboxylate. This is Gamma-glutamyl phosphate reductase from Laribacter hongkongensis (strain HLHK9).